Here is a 619-residue protein sequence, read N- to C-terminus: Chaperone protein HscA homolog (619 aa).

The protein belongs to the heat shock protein 70 family.

Functionally, chaperone involved in the maturation of iron-sulfur cluster-containing proteins. Has a low intrinsic ATPase activity which is markedly stimulated by HscB. The polypeptide is Chaperone protein HscA homolog (Haemophilus influenzae (strain PittGG)).